The primary structure comprises 274 residues: Dermonecrotic toxin SdSicTox-betaIIB1bii (274 aa).

Residue H5 is part of the active site. Mg(2+) is bound by residues E25 and D27. The Nucleophile role is filled by H41. Intrachain disulfides connect C45/C51 and C47/C190. A Mg(2+)-binding site is contributed by D85.

This sequence belongs to the arthropod phospholipase D family. Class II subfamily. Mg(2+) is required as a cofactor. As to expression, expressed by the venom gland.

The protein resides in the secreted. It carries out the reaction an N-(acyl)-sphingosylphosphocholine = an N-(acyl)-sphingosyl-1,3-cyclic phosphate + choline. It catalyses the reaction an N-(acyl)-sphingosylphosphoethanolamine = an N-(acyl)-sphingosyl-1,3-cyclic phosphate + ethanolamine. The catalysed reaction is a 1-acyl-sn-glycero-3-phosphocholine = a 1-acyl-sn-glycero-2,3-cyclic phosphate + choline. The enzyme catalyses a 1-acyl-sn-glycero-3-phosphoethanolamine = a 1-acyl-sn-glycero-2,3-cyclic phosphate + ethanolamine. Functionally, dermonecrotic toxins cleave the phosphodiester linkage between the phosphate and headgroup of certain phospholipids (sphingolipid and lysolipid substrates), forming an alcohol (often choline) and a cyclic phosphate. This toxin acts on sphingomyelin (SM). It may also act on ceramide phosphoethanolamine (CPE), lysophosphatidylcholine (LPC) and lysophosphatidylethanolamine (LPE), but not on lysophosphatidylserine (LPS), and lysophosphatidylglycerol (LPG). It acts by transphosphatidylation, releasing exclusively cyclic phosphate products as second products. Induces dermonecrosis, hemolysis, increased vascular permeability, edema, inflammatory response, and platelet aggregation. The polypeptide is Dermonecrotic toxin SdSicTox-betaIIB1bii (Sicarius cf. damarensis (strain GJB-2008) (Six-eyed sand spider)).